A 219-amino-acid chain; its full sequence is Biofilm-associated metzincin protease inhibitor (219 aa).

The chain crosses the membrane as a helical span at residues 4 to 24 (TWIYAASAAAIGGALIGGWLL). Over residues 191-204 (DIAARSDPHGDHVD) the composition is skewed to basic and acidic residues. Positions 191–219 (DIAARSDPHGDHVDAPLAELPPMPPPAQG) are disordered. Positions 209 to 219 (ELPPMPPPAQG) are enriched in pro residues.

It localises to the cell membrane. Functionally, inhibitor of the metalloendopeptidase Mep72. Forms a protein-protein complex with the protease, which is the product of its coregulated adjacent gene, and probably prevents premature protease activity until the protein has been secreted. The sequence is that of Biofilm-associated metzincin protease inhibitor from Pseudomonas aeruginosa (strain ATCC 15692 / DSM 22644 / CIP 104116 / JCM 14847 / LMG 12228 / 1C / PRS 101 / PAO1).